Here is a 393-residue protein sequence, read N- to C-terminus: MLFQVGGEGTRPTFFEMAAAQQLPASLRAALTYSLGVFALRRSFLHKILDYEDEFFAALMLILEGHSLRTTDGSFAESLYGLRRKSARLRLRKDSARKDSSEEVQHSGLEKRQRILSVVFLVVLPYFKSKLHAIYNKEREARLRESLWGAEDQGFDEADFFTGDDSIVSREPSGNEELSVRVQLATKIKKFIAVCYPWIHASSEGLSFTYQLLYLLDATGFYSLGLQALGIQVCRATGQELMDTSSRISKIRNHERERLRGPPWLKTVQGALLSCSYAVLDYAQTGLIAAVFIFKMMEWWYQSAEERLSAPTVYPPPPPPPAPKMAKEGIPLPPDRSLCALCLQKRANPSVVTVSGFVFCYSCVFKYVSKYKRCPVTLIPASVDQIRRLFQDT.

The Peroxisomal matrix segment spans residues 1–13 (MLFQVGGEGTRPT). Residues 14–41 (FFEMAAAQQLPASLRAALTYSLGVFALR) form a helical membrane-spanning segment. Over 42–44 (RSF) the chain is Cytoplasmic. Residues 45 to 69 (LHKILDYEDEFFAALMLILEGHSLR) traverse the membrane as a helical segment. At 70 to 110 (TTDGSFAESLYGLRRKSARLRLRKDSARKDSSEEVQHSGLE) the chain is on the peroxisomal matrix side. Residues 111-148 (KRQRILSVVFLVVLPYFKSKLHAIYNKEREARLRESLW) traverse the membrane as a helical segment. Over 149–168 (GAEDQGFDEADFFTGDDSIV) the chain is Cytoplasmic. The helical transmembrane segment at 169–214 (SREPSGNEELSVRVQLATKIKKFIAVCYPWIHASSEGLSFTYQLLY) threads the bilayer. The Peroxisomal matrix portion of the chain corresponds to 215 to 285 (LLDATGFYSL…SYAVLDYAQT (71 aa)). Residues 286–312 (GLIAAVFIFKMMEWWYQSAEERLSAPT) form a helical membrane-spanning segment. The Cytoplasmic portion of the chain corresponds to 313–393 (VYPPPPPPPA…DQIRRLFQDT (81 aa)). Zn(2+) is bound by residues Cys-339, Cys-342, Cys-360, and Cys-363. The RING-type; degenerate zinc finger occupies 339–378 (CALCLQKRANPSVVTVSGFVFCYSCVFKYVSKYKRCPVTL).

Belongs to the pex2/pex10/pex12 family. As to quaternary structure, component of the PEX2-PEX10-PEX12 retrotranslocation channel. Interacts (via C-terminus) with PEX7. Interacts with DSK2a and DSK2b. In terms of tissue distribution, expressed in young seedlings, roots, leaves, seeds and flowers.

It localises to the peroxisome membrane. It functions in the pathway protein modification; protein ubiquitination. Component of a retrotranslocation channel required for peroxisome organization by mediating export of the PEX5 receptor from peroxisomes to the cytosol, thereby promoting PEX5 recycling. The retrotranslocation channel is composed of PEX2, PEX10 and PEX12; each subunit contributing transmembrane segments that coassemble into an open channel that specifically allows the passage of PEX5 through the peroxisomal membrane. PEX12 also regulates PEX5 recycling by activating the E3 ubiquitin-protein ligase activity of PEX10. When PEX5 recycling is compromised, PEX12 stimulates PEX10-mediated polyubiquitination of PEX5, leading to its subsequent degradation. This Arabidopsis thaliana (Mouse-ear cress) protein is Peroxisome biogenesis protein 12 (PEX12).